The following is a 542-amino-acid chain: MMVMNTELRQDTPQFKRWEAVPQPLDFKVYIFNVTNPYEVQMGRRPRVVEVGPYVYFQYRHKDNIRFSRDRSKVHFSQQQMYVFDAESSYPLTENDQLTVLNMHMNSILQIIDTQAKETITNFRSDVNNTLEKIPVVRVIKRIIEKTTPIQSILQLAEDETYDSLRLINAELNRIFGRPDSMFLRTTPREFLFEGVPFCVNVIGIAKAICKEIEKRNTKTIRVQPDGSMKFSFFNHKNMTNDGTYTINTGIKEPALTQMIEYWNGRNTLDRWINQSAGSSSKCNKIVGTDGSGYPPFREGVERMTIFSSDICRTVDIKYVGPSSYEGIPALRFETDSHFLNEIGPEYGNDCYCVNRIPKAIVKNNGCLYKGALDLSTCFDAPVVLTHPHMMGAAQEYTSLIDGLYPDPEKHQIFVDVEPLTGTPLNGGKRVQFNMFLRRIDSIRLTDRLQTTLFPVLWIEEGIALNEDMVKLIDDSLMKVLTLLDIVQWVMIGSGLLLAIIMPIVYFIKRRPSSGSITPTLTTTTSTVSISDGGGLGGNPQK.

Residues 1-487 (MMVMNTELRQ…MKVLTLLDIV (487 aa)) lie on the Extracellular side of the membrane. N-linked (GlcNAc...) asparagine glycans are attached at residues Asn33, Asn128, Asn238, and Asn274. 3 disulfide bridges follow: Cys283-Cys351, Cys312-Cys378, and Cys353-Cys367. Residues 488-508 (QWVMIGSGLLLAIIMPIVYFI) traverse the membrane as a helical segment. Topologically, residues 509 to 542 (KRRPSSGSITPTLTTTTSTVSISDGGGLGGNPQK) are cytoplasmic.

It belongs to the CD36 family. Detected in the antenna, legs and wings. Higher levels of expression detected in male compared to female.

It localises to the cell membrane. Plays an olfactory role that is not restricted to pheromone sensitivity. The polypeptide is Sensory neuron membrane protein 2 (Aedes aegypti (Yellowfever mosquito)).